We begin with the raw amino-acid sequence, 206 residues long: Pyridoxine/pyridoxamine 5'-phosphate oxidase (206 aa).

FMN is bound by residues 49-54 (RMVLLK), 69-70 (YT), Lys-76, and Gln-98. Lys-54 is a binding site for substrate. Substrate-binding residues include Tyr-116, Arg-120, and Ser-124. Residues 133–134 (QS) and Trp-177 each bind FMN. 183-185 (RLH) is a binding site for substrate. Arg-187 lines the FMN pocket.

It belongs to the pyridoxamine 5'-phosphate oxidase family. Homodimer. It depends on FMN as a cofactor.

The catalysed reaction is pyridoxamine 5'-phosphate + O2 + H2O = pyridoxal 5'-phosphate + H2O2 + NH4(+). It catalyses the reaction pyridoxine 5'-phosphate + O2 = pyridoxal 5'-phosphate + H2O2. It functions in the pathway cofactor metabolism; pyridoxal 5'-phosphate salvage; pyridoxal 5'-phosphate from pyridoxamine 5'-phosphate: step 1/1. The protein operates within cofactor metabolism; pyridoxal 5'-phosphate salvage; pyridoxal 5'-phosphate from pyridoxine 5'-phosphate: step 1/1. In terms of biological role, catalyzes the oxidation of either pyridoxine 5'-phosphate (PNP) or pyridoxamine 5'-phosphate (PMP) into pyridoxal 5'-phosphate (PLP). This is Pyridoxine/pyridoxamine 5'-phosphate oxidase from Jannaschia sp. (strain CCS1).